A 546-amino-acid chain; its full sequence is CTP synthase (546 aa).

The tract at residues 1–266 (MTKYIFVTGG…GDYLVERLGL (266 aa)) is amidoligase domain. CTP is bound at residue serine 13. Residue serine 13 coordinates UTP. 14–19 (SVGKGI) lines the ATP pocket. L-glutamine is bound at residue tyrosine 54. Aspartate 71 serves as a coordination point for ATP. Aspartate 71 and glutamate 141 together coordinate Mg(2+). Residues 148-150 (DIE), 187-192 (KTKPTQ), and lysine 223 each bind CTP. UTP is bound by residues 187–192 (KTKPTQ) and lysine 223. The Glutamine amidotransferase type-1 domain maps to 291–533 (PIALVGKYVE…VAAAAQTLLA (243 aa)). Residue glycine 353 participates in L-glutamine binding. The Nucleophile; for glutamine hydrolysis role is filled by cysteine 380. L-glutamine is bound by residues 381 to 384 (LGMQ), glutamate 404, and arginine 461. Catalysis depends on residues histidine 506 and glutamate 508.

It belongs to the CTP synthase family. Homotetramer.

The enzyme catalyses UTP + L-glutamine + ATP + H2O = CTP + L-glutamate + ADP + phosphate + 2 H(+). The catalysed reaction is L-glutamine + H2O = L-glutamate + NH4(+). It catalyses the reaction UTP + NH4(+) + ATP = CTP + ADP + phosphate + 2 H(+). The protein operates within pyrimidine metabolism; CTP biosynthesis via de novo pathway; CTP from UDP: step 2/2. Allosterically activated by GTP, when glutamine is the substrate; GTP has no effect on the reaction when ammonia is the substrate. The allosteric effector GTP functions by stabilizing the protein conformation that binds the tetrahedral intermediate(s) formed during glutamine hydrolysis. Inhibited by the product CTP, via allosteric rather than competitive inhibition. Its function is as follows. Catalyzes the ATP-dependent amination of UTP to CTP with either L-glutamine or ammonia as the source of nitrogen. Regulates intracellular CTP levels through interactions with the four ribonucleotide triphosphates. This is CTP synthase from Chloroflexus aurantiacus (strain ATCC 29366 / DSM 635 / J-10-fl).